Consider the following 347-residue polypeptide: Autoinducer 2 import system permease protein LsrC (347 aa).

9 consecutive transmembrane segments (helical) span residues 14–34 (LLAI…YLSV), 39–59 (MVFS…MVML), 72–92 (GMCA…PVAC), 93–113 (LATL…VAWL), 115–135 (IPAI…MLLW), 155–175 (VFLG…LMAW), 213–233 (LNGG…GFIP), 249–269 (VLGG…ILGA), and 284–304 (IPAW…LVFD).

It belongs to the binding-protein-dependent transport system permease family. AraH/RbsC subfamily. The complex is composed of two ATP-binding proteins (LsrA), two transmembrane proteins (LsrC and LsrD) and a solute-binding protein (LsrB).

The protein resides in the cell inner membrane. Its function is as follows. Part of the ABC transporter complex LsrABCD involved in autoinducer 2 (AI-2) import. Probably responsible for the translocation of the substrate across the membrane. This Salmonella paratyphi A (strain ATCC 9150 / SARB42) protein is Autoinducer 2 import system permease protein LsrC (lsrC).